We begin with the raw amino-acid sequence, 148 residues long: UPF0178 protein LPC_0108 (148 aa).

It belongs to the UPF0178 family.

This is UPF0178 protein LPC_0108 from Legionella pneumophila (strain Corby).